The sequence spans 157 residues: Cyclic pyranopterin monophosphate synthase (157 aa).

Residues leucine 73–histidine 75 and methionine 110–glutamate 111 contribute to the substrate site. Aspartate 125 is an active-site residue.

Belongs to the MoaC family. Homohexamer; trimer of dimers.

It carries out the reaction (8S)-3',8-cyclo-7,8-dihydroguanosine 5'-triphosphate = cyclic pyranopterin phosphate + diphosphate. Its pathway is cofactor biosynthesis; molybdopterin biosynthesis. In terms of biological role, catalyzes the conversion of (8S)-3',8-cyclo-7,8-dihydroguanosine 5'-triphosphate to cyclic pyranopterin monophosphate (cPMP). This chain is Cyclic pyranopterin monophosphate synthase, found in Pseudomonas fluorescens (strain SBW25).